Here is a 1087-residue protein sequence, read N- to C-terminus: Formin-H (1087 aa).

The segment covering 1–23 (MSFDLESNSSGGSTIGRNSSIRL) has biased composition (polar residues). Residues 1–25 (MSFDLESNSSGGSTIGRNSSIRLSS) form a disordered region. In terms of domain architecture, GBD/FH3 spans 34–394 (VSLNEIIDLD…QLEDELKIHP (361 aa)). Composition is skewed to low complexity over residues 416 to 436 (FGFG…SMAK) and 549 to 558 (SPGSTLSPSP). Disordered stretches follow at residues 416-445 (FGFG…DNEE), 549-625 (SPGS…PAKP), and 1048-1087 (VDSL…QLKK). The stretch at 433 to 461 (SMAKTELKKDNEEKQKTIEHLLKQLNKFS) forms a coiled coil. Over residues 569 to 588 (FGITSSSIHTSTDKLTNSTE) the composition is skewed to polar residues. Positions 589-615 (PILGSPPPPPPPPMSGGGGPPPPPPPP) constitute an FH1 domain. Positions 592–616 (GSPPPPPPPPMSGGGGPPPPPPPPG) are enriched in pro residues. The FH2 domain maps to 623-1016 (AKPIIKPSVK…ENSKMEDPEK (394 aa)). In terms of domain architecture, DAD spans 1013 to 1051 (DPEKGGLQDLSSQIRSGQLFKDRRVGDSVIAQMQNVDSL).

This sequence belongs to the formin homology family. Diaphanous subfamily. Interacts with vasP, proB/profilin-2 and rac1A. Interacts (via GBD/FH3 domain) with activated Rho-GTPases.

The protein localises to the cytoplasm. Its subcellular location is the cell cortex. The protein resides in the cytoskeleton. Functionally, formins play an important role in the nucleation of actin and the formation of linear actin filaments. Important for cell migration and formation, elongation and maintenance of filopodia. Specifically controls filopodial dynamics by regulating actin turnover at the barbed ends of actin filaments. The protein is Formin-H (forH) of Dictyostelium discoideum (Social amoeba).